A 658-amino-acid polypeptide reads, in one-letter code: Aminopeptidase P1 (658 aa).

Positions 69 and 436 each coordinate a peptide. Mn(2+) contacts are provided by Asp456, Asp467, and His530. Residues His530, His539, and Glu563 each coordinate a peptide. Positions 563 and 577 each coordinate Mn(2+).

Belongs to the peptidase M24B family. As to quaternary structure, homodimer. Interacts with N-1-naphthylphthalamic acid (NPA). Interacts with NBCL/BOP2/COCH around the plasma membrane and in the nucleus; this interaction disturbs its regulation of the nuclear transcription factor Y subunit (NF-YA1). Mn(2+) is required as a cofactor. Requires Zn(2+) as cofactor. As to expression, expressed at similar levels in shoot apical meristems (SAM), root meristems (RM), root apical meristems (RAM), roots and leaves and, to a slightly lesser degree, in root nodules.

It localises to the nucleus. The protein resides in the cytoplasm. It is found in the cell membrane. The protein localises to the microsome membrane. The catalysed reaction is Release of any N-terminal amino acid, including proline, that is linked to proline, even from a dipeptide or tripeptide.. In terms of biological role, catalyzes the removal of a penultimate prolyl residue from the N-termini of peptides, such as Arg-Pro-Pro. Aminopeptidase that binds to the auxin transport inhibitor N-1-naphthylphthalamic acid (NPA). May play a negative role in the regulation of PIN auxin transport proteins. Involved in the coordination of the symbiotic nodule developmental program; prevents the formation of root nodules by regulating the expression of the nuclear transcription factor Y subunit (NF-YA1), a key nodulin. This Lotus japonicus (Lotus corniculatus var. japonicus) protein is Aminopeptidase P1.